The sequence spans 475 residues: Trifunctional enzyme subunit beta, mitochondrial (475 aa).

The N-terminal 34 residues, 1–34, are a transit peptide targeting the mitochondrion; sequence MTTILTSTFRNLSTTSKWALRFSVRPLSCSSQVQ. Lys53 carries the post-translational modification N6-succinyllysine. Lys73 is subject to N6-acetyllysine; alternate. Lys73 carries the post-translational modification N6-succinyllysine; alternate. Cys139 functions as the Acyl-thioester intermediate in the catalytic mechanism. The stretch at 174-221 is an intramembrane region; it reads IRHSRNMRKMMLDLNKAKTLAQRLSLLTKFRLNFLSPELPAVAEFSTN. The residue at position 189 (Lys189) is an N6-acetyllysine; alternate. Lys189 carries the post-translational modification N6-succinyllysine; alternate. An N6-succinyllysine mark is found at Lys191, Lys273, and Lys292. Position 294 is an N6-acetyllysine; alternate (Lys294). The residue at position 294 (Lys294) is an N6-succinyllysine; alternate. Lys299 carries the post-translational modification N6-acetyllysine. At Lys333 the chain carries N6-acetyllysine; alternate. Lys333 is subject to N6-succinyllysine; alternate. An N6-acetyllysine mark is found at Lys349 and Lys362. The Proton donor/acceptor role is filled by Cys459.

Belongs to the thiolase-like superfamily. Thiolase family. Heterotetramer of 2 alpha/HADHA and 2 beta/HADHB subunits; forms the mitochondrial trifunctional enzyme. Also purified as higher order heterooligomers including a 4 alpha/HADHA and 4 beta/HADHB heterooligomer which physiological significance remains unclear. The mitochondrial trifunctional enzyme interacts with MTLN. Interacts with RSAD2/viperin.

It is found in the mitochondrion. The protein resides in the mitochondrion inner membrane. It localises to the mitochondrion outer membrane. Its subcellular location is the endoplasmic reticulum. It catalyses the reaction an acyl-CoA + acetyl-CoA = a 3-oxoacyl-CoA + CoA. It carries out the reaction butanoyl-CoA + acetyl-CoA = 3-oxohexanoyl-CoA + CoA. The catalysed reaction is hexanoyl-CoA + acetyl-CoA = 3-oxooctanoyl-CoA + CoA. The enzyme catalyses octanoyl-CoA + acetyl-CoA = 3-oxodecanoyl-CoA + CoA. It catalyses the reaction decanoyl-CoA + acetyl-CoA = 3-oxododecanoyl-CoA + CoA. It carries out the reaction dodecanoyl-CoA + acetyl-CoA = 3-oxotetradecanoyl-CoA + CoA. The catalysed reaction is tetradecanoyl-CoA + acetyl-CoA = 3-oxohexadecanoyl-CoA + CoA. Its pathway is lipid metabolism; fatty acid beta-oxidation. Functionally, mitochondrial trifunctional enzyme catalyzes the last three of the four reactions of the mitochondrial beta-oxidation pathway. The mitochondrial beta-oxidation pathway is the major energy-producing process in tissues and is performed through four consecutive reactions breaking down fatty acids into acetyl-CoA. Among the enzymes involved in this pathway, the trifunctional enzyme exhibits specificity for long-chain fatty acids. Mitochondrial trifunctional enzyme is a heterotetrameric complex composed of two proteins, the trifunctional enzyme subunit alpha/HADHA carries the 2,3-enoyl-CoA hydratase and the 3-hydroxyacyl-CoA dehydrogenase activities, while the trifunctional enzyme subunit beta/HADHB described here bears the 3-ketoacyl-CoA thiolase activity. The chain is Trifunctional enzyme subunit beta, mitochondrial (Hadhb) from Rattus norvegicus (Rat).